A 508-amino-acid chain; its full sequence is Lysine--tRNA ligase (508 aa).

The Mg(2+) site is built by Glu418 and Glu425.

It belongs to the class-II aminoacyl-tRNA synthetase family. In terms of assembly, homodimer. Mg(2+) is required as a cofactor.

The protein resides in the cytoplasm. The catalysed reaction is tRNA(Lys) + L-lysine + ATP = L-lysyl-tRNA(Lys) + AMP + diphosphate. This Burkholderia pseudomallei (strain K96243) protein is Lysine--tRNA ligase.